We begin with the raw amino-acid sequence, 102 residues long: Large ribosomal subunit protein bL21 (102 aa).

It belongs to the bacterial ribosomal protein bL21 family. Part of the 50S ribosomal subunit. Contacts protein L20.

Functionally, this protein binds to 23S rRNA in the presence of protein L20. In Nocardioides sp. (strain ATCC BAA-499 / JS614), this protein is Large ribosomal subunit protein bL21.